We begin with the raw amino-acid sequence, 222 residues long: UPF0502 protein PBPRB0676 (222 aa).

The protein belongs to the UPF0502 family.

The protein is UPF0502 protein PBPRB0676 of Photobacterium profundum (strain SS9).